A 304-amino-acid chain; its full sequence is Small ribosomal subunit protein uS2 (304 aa).

Position 2 is an N-acetylserine (Ser-2). Laminin-binding stretches follow at residues Ile-161–Arg-180 and Arg-205–Gly-229. [DE]-W-[ST] repeat units lie at residues Glu-230–Ser-232, Asp-245–Ser-247, Asp-275–Ser-277, Asp-284–Ser-286, and Asp-302–Ser-304. Residues Glu-242 to Ser-304 are laminin-binding. Residues Ile-257 to Ser-304 form a disordered region. Positions Trp-276–Ala-293 are enriched in polar residues.

It belongs to the universal ribosomal protein uS2 family. In terms of assembly, monomer (37LRP) and homodimer (67LR). Component of the small ribosomal subunit. Mature ribosomes consist of a small (40S) and a large (60S) subunit. The 40S subunit contains about 33 different proteins and 1 molecule of RNA (18S). The 60S subunit contains about 49 different proteins and 3 molecules of RNA (28S, 5.8S and 5S). Interacts with rps21. Interacts with several laminins including at least lamb1. Interacts with mdk. In terms of processing, acylated. Acylation may be a prerequisite for conversion of the monomeric 37 kDa laminin receptor precursor (37LRP) to the mature dimeric 67 kDa laminin receptor (67LR), and may provide a mechanism for membrane association. Cleaved by stromelysin-3 (ST3) at the cell surface. Cleavage by stromelysin-3 may be a mechanism to alter cell-extracellular matrix interactions.

Its subcellular location is the cell membrane. The protein localises to the cytoplasm. It is found in the nucleus. In terms of biological role, required for the assembly and/or stability of the 40S ribosomal subunit. Required for the processing of the 20S rRNA-precursor to mature 18S rRNA in a late step of the maturation of 40S ribosomal subunits. Also functions as a cell surface receptor for laminin. Plays a role in cell adhesion to the basement membrane and in the consequent activation of signaling transduction pathways. May play a role in cell fate determination and tissue morphogenesis. This Sparus aurata (Gilthead sea bream) protein is Small ribosomal subunit protein uS2 (rpsa).